A 418-amino-acid polypeptide reads, in one-letter code: Glutamyl-tRNA reductase (418 aa).

Substrate contacts are provided by residues 49–52 (TCNR), Ser-108, 113–115 (EPQ), and Gln-119. Residue Cys-50 is the Nucleophile of the active site. 188 to 193 (GAGETI) contributes to the NADP(+) binding site.

It belongs to the glutamyl-tRNA reductase family. In terms of assembly, homodimer.

The catalysed reaction is (S)-4-amino-5-oxopentanoate + tRNA(Glu) + NADP(+) = L-glutamyl-tRNA(Glu) + NADPH + H(+). The protein operates within porphyrin-containing compound metabolism; protoporphyrin-IX biosynthesis; 5-aminolevulinate from L-glutamyl-tRNA(Glu): step 1/2. In terms of biological role, catalyzes the NADPH-dependent reduction of glutamyl-tRNA(Glu) to glutamate 1-semialdehyde (GSA). This Aliivibrio fischeri (strain ATCC 700601 / ES114) (Vibrio fischeri) protein is Glutamyl-tRNA reductase.